The following is a 939-amino-acid chain: Progesterone receptor (939 aa).

Residues Met1 to Ala11 are compositionally biased toward basic and acidic residues. The segment at Met1–Leu174 is AF3; mediates transcriptional activation (in isoform B). Residues Met1–Cys302 form a disordered region. Positions Met1 to Ile572 are modulating, Ala/Pro-rich. Lys7 is covalently cross-linked (Glycyl lysine isopeptide (Lys-Gly) (interchain with G-Cter in SUMO)). Over residues Ala15–Glu26 the composition is skewed to low complexity. The residue at position 20 (Ser20) is a Phosphoserine. Residues Pro27–Arg36 show a composition bias toward basic and acidic residues. Residues Ala49 to Ser67 show a composition bias toward low complexity. The residue at position 141 (Ser141) is a Phosphoserine. The interval Met175 to His314 is mediates transcriptional transrepression (in isoform A). A Nuclear localization signal motif is present at residues Lys193 to Arg197. Ser200 is modified (phosphoserine). Composition is skewed to low complexity over residues Gly211 to Gly230 and Pro257 to Val278. The residue at position 303 (Ser303) is a Phosphoserine; by MAPK1. Ser349 is modified (phosphoserine; by MAPK). Lys392 is covalently cross-linked (Glycyl lysine isopeptide (Lys-Gly) (interchain with G-Cter in SUMO); alternate). Residue Lys392 forms a Glycyl lysine isopeptide (Lys-Gly) (interchain with G-Cter in ubiquitin); alternate linkage. Residue Ser404 is modified to Phosphoserine; by CDK2. The segment at Pro463 to Arg552 is AF1; mediates transcriptional activation. Residue Lys537 forms a Glycyl lysine isopeptide (Lys-Gly) (interchain with G-Cter in SUMO) linkage. 2 consecutive NR C4-type zinc fingers follow at residues Cys573 to Cys593 and Cys609 to Cys633. The nuclear receptor DNA-binding region spans Cys573 to Phe645. Ser682 carries the post-translational modification Phosphoserine. An NR LBD domain is found at Gln685–Ile919. Residues Leu693–Lys939 form an AF2; mediates transcriptional activation region.

The protein belongs to the nuclear hormone receptor family. NR3 subfamily. Interacts with SMARD1 and UNC45A. Interacts with CUEDC2; the interaction promotes ubiquitination, decreases sumoylation, and represses transcriptional activity. Interacts with PIAS3; the interaction promotes sumoylation of PR in a hormone-dependent manner, inhibits DNA-binding, and alters nuclear export. Interacts with SP1; the interaction requires ligand-induced phosphorylation on Ser-349 by ERK1/2-MAPK. Interacts with PRMT2. Isoform A interacts with NCOR2. Isoform B (but not isoform A) interacts with NCOA2 and NCOA1. Isoform B (but not isoform A) interacts with KLF9. Interacts with GTF2B. In terms of processing, phosphorylated on multiple serine sites. Several of these sites are hormone-dependent. Phosphorylation on Ser-303 occurs preferentially on isoform B, is highly hormone-dependent and modulates ubiquitination and sumoylation on Lys-392. Phosphorylation on Ser-303 and Ser-349 also requires induction by hormone. Basal phosphorylation on Ser-200 and Ser-404 is increased in response to progesterone and can be phosphorylated in vitro by the CDK2-A1 complex. Increased levels of phosphorylation on Ser-404 also in the presence of EGF, heregulin, IGF, PMA and FBS. Phosphorylation at this site by CDK2 is ligand-independent, and increases nuclear translocation and transcriptional activity. Phosphorylation at Ser-303, but not at Ser-200, is impaired during the G(2)/M phase of the cell cycle. Phosphorylation on Ser-349 by ERK1/2 MAPK is required for interaction with SP1. Sumoylation is hormone-dependent and represses transcriptional activity. Sumoylation on all three sites is enhanced by PIAS3. Desumoylated by SENP1. Sumoylation on Lys-392, the main site of sumoylation, is repressed by ubiquitination on the same site, and modulated by phosphorylation at Ser-303. Post-translationally, ubiquitination is hormone-dependent and represses sumoylation on the same site. Promoted by MAPK-mediated phosphorylation on Ser-303. In terms of processing, palmitoylated by ZDHHC7 and ZDHHC21. Palmitoylation is required for plasma membrane targeting and for rapid intracellular signaling via ERK and AKT kinases and cAMP generation. As to expression, expressed in mammary gland and uterus.

The protein localises to the nucleus. The protein resides in the cytoplasm. Its function is as follows. The steroid hormones and their receptors are involved in the regulation of eukaryotic gene expression and affect cellular proliferation and differentiation in target tissues. Depending on the isoform, progesterone receptor functions as a transcriptional activator or repressor. In terms of biological role, ligand-dependent transdominant repressor of steroid hormone receptor transcriptional activity including repression of its isoform B, MR and ER. Transrepressional activity may involve recruitment of corepressor NCOR2. Transcriptional activator of several progesteron-dependent promoters in a variety of cell types. Involved in activation of SRC-dependent MAPK signaling on hormone stimulation. This chain is Progesterone receptor (PGR), found in Canis lupus familiaris (Dog).